Reading from the N-terminus, the 58-residue chain is ATP synthase F(0) complex subunit k, mitochondrial (58 aa).

An N6-acetyllysine mark is found at K16 and K17. Residues 23 to 45 form a helical membrane-spanning segment; the sequence is TLTGRMNCVLATYGGIALLVLYF.

As to quaternary structure, component of the ATP synthase complex composed at least of ATP5F1A/subunit alpha, ATP5F1B/subunit beta, ATP5MC1/subunit c (homooctomer), MT-ATP6/subunit a, MT-ATP8/subunit 8, ATP5ME/subunit e, ATP5MF/subunit f, ATP5MG/subunit g, ATP5MK/subunit k, ATP5MJ/subunit j, ATP5F1C/subunit gamma, ATP5F1D/subunit delta, ATP5F1E/subunit epsilon, ATP5PF/subunit F6, ATP5PB/subunit b, ATP5PD/subunit d, ATP5PO/subunit OSCP. ATP synthase complex consists of a soluble F(1) head domain (subunits alpha(3) and beta(3)) - the catalytic core - and a membrane F(0) domain - the membrane proton channel (subunits c, a, 8, e, f, g, k and j). These two domains are linked by a central stalk (subunits gamma, delta, and epsilon) rotating inside the F1 region and a stationary peripheral stalk (subunits F6, b, d, and OSCP). The ATP synthase complex/complex V exists as a monomeric and a dimeric supercomplex that helps shape mitochondrial cristae to optimize proton flow.

The protein localises to the mitochondrion membrane. Its function is as follows. Subunit k, of the mitochondrial membrane ATP synthase complex (F(1)F(0) ATP synthase or Complex V) that produces ATP from ADP in the presence of a proton gradient across the membrane which is generated by electron transport complexes of the respiratory chain. ATP synthase complex consist of a soluble F(1) head domain - the catalytic core - and a membrane F(1) domain - the membrane proton channel. These two domains are linked by a central stalk rotating inside the F(1) region and a stationary peripheral stalk. During catalysis, ATP synthesis in the catalytic domain of F(1) is coupled via a rotary mechanism of the central stalk subunits to proton translocation. In vivo, can only synthesize ATP although its ATP hydrolase activity can be activated artificially in vitro. Part of the complex F(0) domain. Required for dimerization of the ATP synthase complex and as such regulates ATP synthesis in the mitochondria. This is ATP synthase F(0) complex subunit k, mitochondrial from Mus musculus (Mouse).